Consider the following 511-residue polypeptide: GMP synthase [glutamine-hydrolyzing] (511 aa).

Residues 5–195 enclose the Glutamine amidotransferase type-1 domain; the sequence is IVIVLDFGGQ…LFNICGCKGD (191 aa). Cys82 (nucleophile) is an active-site residue. Residues His169 and Glu171 contribute to the active site. One can recognise a GMPS ATP-PPase domain in the interval 196–386; it reads WKTSSFIEER…LGIPEKIVKR (191 aa). 223 to 229 contacts ATP; it reads SGGVDSS.

In terms of assembly, homodimer.

The enzyme catalyses XMP + L-glutamine + ATP + H2O = GMP + L-glutamate + AMP + diphosphate + 2 H(+). The protein operates within purine metabolism; GMP biosynthesis; GMP from XMP (L-Gln route): step 1/1. Functionally, catalyzes the synthesis of GMP from XMP. The sequence is that of GMP synthase [glutamine-hydrolyzing] from Caldicellulosiruptor saccharolyticus (strain ATCC 43494 / DSM 8903 / Tp8T 6331).